A 212-amino-acid chain; its full sequence is MNDAALAPDVSAALERGLQAQSLDAAFAAPLLRYLALLVRWNKTYNLTAVRDPREMVTRHLLDSLAMQPYIASGALADLGTGPGLPGIPLAITRPQLQVTLVESNGKKARFMREALRHLELGNARVAESRAEALAEPAAYDHLTARALDTLAGIIAVGGHLLRPGGSLLAMKGVYPHEEIAALPAGWTVGEVHPLQVPGLEGERHLVVVRKG.

S-adenosyl-L-methionine contacts are provided by residues G80, L85, 131–132 (AE), and R146.

This sequence belongs to the methyltransferase superfamily. RNA methyltransferase RsmG family.

The protein resides in the cytoplasm. It carries out the reaction guanosine(527) in 16S rRNA + S-adenosyl-L-methionine = N(7)-methylguanosine(527) in 16S rRNA + S-adenosyl-L-homocysteine. In terms of biological role, specifically methylates the N7 position of guanine in position 527 of 16S rRNA. This chain is Ribosomal RNA small subunit methyltransferase G, found in Xanthomonas axonopodis pv. citri (strain 306).